The primary structure comprises 109 residues: Guanylate cyclase activator 2B (109 aa).

The N-terminal stretch at methionine 1 to serine 23 is a signal peptide. A propeptide spanning residues valine 24–serine 94 is cleaved from the precursor. Cystine bridges form between cysteine 65/cysteine 78, cysteine 98/cysteine 106, and cysteine 101/cysteine 109.

Belongs to the guanylin family. In terms of tissue distribution, small and large intestine and atria and ventricles of heart. Both uroguanylin and prouroguanylin are found in plasma.

It is found in the secreted. In terms of biological role, endogenous activator of intestinal guanylate cyclase. It stimulates this enzyme through the same receptor binding region as the heat-stable enterotoxins. May be a potent physiological regulator of intestinal fluid and electrolyte transport. May be an autocrine/paracrine regulator of intestinal salt and water transport. In Didelphis virginiana (North American opossum), this protein is Guanylate cyclase activator 2B (GUCA2B).